Here is a 108-residue protein sequence, read N- to C-terminus: Iron-sulfur cluster assembly protein CyaY (108 aa).

This sequence belongs to the frataxin family.

Its function is as follows. Involved in iron-sulfur (Fe-S) cluster assembly. May act as a regulator of Fe-S biogenesis. This Pseudomonas aeruginosa (strain ATCC 15692 / DSM 22644 / CIP 104116 / JCM 14847 / LMG 12228 / 1C / PRS 101 / PAO1) protein is Iron-sulfur cluster assembly protein CyaY.